The primary structure comprises 122 residues: Large ribosomal subunit protein uL14 (122 aa).

It belongs to the universal ribosomal protein uL14 family. As to quaternary structure, part of the 50S ribosomal subunit. Forms a cluster with proteins L3 and L19. In the 70S ribosome, L14 and L19 interact and together make contacts with the 16S rRNA in bridges B5 and B8.

In terms of biological role, binds to 23S rRNA. Forms part of two intersubunit bridges in the 70S ribosome. This is Large ribosomal subunit protein uL14 from Azoarcus sp. (strain BH72).